We begin with the raw amino-acid sequence, 409 residues long: Elongation factor Tu (409 aa).

A tr-type G domain is found at 10–214 (KPHVNIGTIG…EVDAYIPTPE (205 aa)). The G1 stretch occupies residues 19 to 26 (GHVDHGKT). 19 to 26 (GHVDHGKT) is a GTP binding site. Threonine 26 contributes to the Mg(2+) binding site. A G2 region spans residues 60 to 64 (GITIN). A G3 region spans residues 81-84 (DCPG). Residues 81–85 (DCPGH) and 136–139 (NKQD) each bind GTP. The G4 stretch occupies residues 136 to 139 (NKQD). Positions 174 to 176 (SAL) are G5.

This sequence belongs to the TRAFAC class translation factor GTPase superfamily. Classic translation factor GTPase family. EF-Tu/EF-1A subfamily. Monomer.

The protein resides in the cytoplasm. The catalysed reaction is GTP + H2O = GDP + phosphate + H(+). GTP hydrolase that promotes the GTP-dependent binding of aminoacyl-tRNA to the A-site of ribosomes during protein biosynthesis. This Acaryochloris marina (strain MBIC 11017) protein is Elongation factor Tu.